We begin with the raw amino-acid sequence, 245 residues long: Caffeoyl-CoA O-methyltransferase (245 aa).

Substrate is bound at residue Lys-19. Residues Thr-61, Glu-83, 85–86 (GV), Ser-91, Asp-109, and Ala-138 each bind S-adenosyl-L-methionine. Asp-161 lines the substrate pocket. Position 161 (Asp-161) interacts with a divalent metal cation. Asp-163 contributes to the S-adenosyl-L-methionine binding site. The a divalent metal cation site is built by Asp-187 and Asn-188. Asn-192 provides a ligand contact to substrate.

The protein belongs to the class I-like SAM-binding methyltransferase superfamily. Cation-dependent O-methyltransferase family. CCoAMT subfamily. It depends on a divalent metal cation as a cofactor.

It carries out the reaction (E)-caffeoyl-CoA + S-adenosyl-L-methionine = (E)-feruloyl-CoA + S-adenosyl-L-homocysteine + H(+). It participates in aromatic compound metabolism; phenylpropanoid biosynthesis. Functionally, methylates caffeoyl-CoA to feruloyl-CoA and 5-hydroxyferuloyl-CoA to sinapoyl-CoA. Plays a role in the synthesis of feruloylated polysaccharides. Involved in the reinforcement of the plant cell wall. Also involved in the responding to wounding or pathogen challenge by the increased formation of cell wall-bound ferulic acid polymers. This chain is Caffeoyl-CoA O-methyltransferase (CCOAOMT), found in Zinnia elegans (Garden zinnia).